Consider the following 610-residue polypeptide: Cytosolic 5'-nucleotidase 1B (610 aa).

Disordered stretches follow at residues 1–34 and 101–277; these read MSQT…DKTG and GSQE…DEDD. The segment covering 9–34 has biased composition (basic and acidic residues); sequence KKNEPGMRSSKESLEAEKRKESDKTG. Positions 119–132 are enriched in polar residues; the sequence is SQWSRISRSPSTKA. Residues 148–166 show a composition bias toward low complexity; the sequence is PSSSTSSRTPSTSPSLHDS. A compositionally biased stretch (pro residues) spans 167–183; sequence SPPPLSGQPSLQPPASP. Polar residues predominate over residues 236 to 265; that stretch reads SRTSPTEWKSSSQRRGIYPASTQLDRNSLS. Asp-467 acts as the Nucleophile in catalysis.

The protein belongs to the 5'-nucleotidase type 3 family. Requires Mg(2+) as cofactor. As to expression, highly expressed in testis, placenta and pancreas. Detected at lower levels in heart, kidney, liver and lung.

It is found in the cytoplasm. It catalyses the reaction a ribonucleoside 5'-phosphate + H2O = a ribonucleoside + phosphate. The enzyme catalyses AMP + H2O = adenosine + phosphate. With respect to regulation, activated by ADP. Catalyzes the hydrolysis of nucleotide monophosphates, releasing inorganic phosphate and the corresponding nucleoside, AMP is the major substrate. This Homo sapiens (Human) protein is Cytosolic 5'-nucleotidase 1B (NT5C1B).